The following is a 239-amino-acid chain: 1-(5-phosphoribosyl)-5-[(5-phosphoribosylamino)methylideneamino] imidazole-4-carboxamide isomerase (239 aa).

Catalysis depends on Asp-8, which acts as the Proton acceptor. The active-site Proton donor is Asp-129.

Belongs to the HisA/HisF family.

The protein resides in the cytoplasm. The enzyme catalyses 1-(5-phospho-beta-D-ribosyl)-5-[(5-phospho-beta-D-ribosylamino)methylideneamino]imidazole-4-carboxamide = 5-[(5-phospho-1-deoxy-D-ribulos-1-ylimino)methylamino]-1-(5-phospho-beta-D-ribosyl)imidazole-4-carboxamide. It functions in the pathway amino-acid biosynthesis; L-histidine biosynthesis; L-histidine from 5-phospho-alpha-D-ribose 1-diphosphate: step 4/9. This chain is 1-(5-phosphoribosyl)-5-[(5-phosphoribosylamino)methylideneamino] imidazole-4-carboxamide isomerase, found in Bacillus cereus (strain AH187).